A 620-amino-acid chain; its full sequence is Guanylate cyclase soluble subunit beta-1 (620 aa).

His105 is a heme binding site. In terms of domain architecture, Guanylate cyclase spans 421 to 554; the sequence is TILFSGIVGF…NTVNLTSRTE (134 aa).

It belongs to the adenylyl cyclase class-4/guanylyl cyclase family. The active enzyme is formed by a heterodimer of an alpha and a beta subunit. Heterodimer with GUCY1A1. Can also form inactive homodimers in vitro. Requires heme as cofactor.

The protein localises to the cytoplasm. It catalyses the reaction GTP = 3',5'-cyclic GMP + diphosphate. Activated by nitric oxide in the presence of magnesium or manganese ions. Functionally, mediates responses to nitric oxide (NO) by catalyzing the biosynthesis of the signaling molecule cGMP. This Mus musculus (Mouse) protein is Guanylate cyclase soluble subunit beta-1 (Gucy1b1).